The primary structure comprises 267 residues: Hydroxyethylthiazole kinase (267 aa).

Met-46 is a binding site for substrate. ATP-binding residues include Arg-121 and Thr-167. Ala-194 lines the substrate pocket.

This sequence belongs to the Thz kinase family. Mg(2+) serves as cofactor.

It catalyses the reaction 5-(2-hydroxyethyl)-4-methylthiazole + ATP = 4-methyl-5-(2-phosphooxyethyl)-thiazole + ADP + H(+). Its pathway is cofactor biosynthesis; thiamine diphosphate biosynthesis; 4-methyl-5-(2-phosphoethyl)-thiazole from 5-(2-hydroxyethyl)-4-methylthiazole: step 1/1. Catalyzes the phosphorylation of the hydroxyl group of 4-methyl-5-beta-hydroxyethylthiazole (THZ). The protein is Hydroxyethylthiazole kinase of Rhizobium leguminosarum bv. trifolii (strain WSM2304).